The following is a 208-amino-acid chain: Small ribosomal subunit protein eS8 (208 aa).

Residues 1–34 (MGISRDHWHKRRATGGKRAPIRKKRKYELGRPAA) are disordered. Positions 7-26 (HWHKRRATGGKRAPIRKKRK) are enriched in basic residues.

Belongs to the eukaryotic ribosomal protein eS8 family. As to quaternary structure, component of the small ribosomal subunit. Identified in a IGF2BP1-dependent mRNP granule complex containing untranslated mRNAs. Part of the small subunit (SSU) processome, composed of more than 70 proteins and the RNA chaperone small nucleolar RNA (snoRNA) U3.

The protein resides in the cytoplasm. The protein localises to the membrane. It localises to the nucleus. It is found in the nucleolus. Its function is as follows. Component of the small ribosomal subunit. The ribosome is a large ribonucleoprotein complex responsible for the synthesis of proteins in the cell. Part of the small subunit (SSU) processome, first precursor of the small eukaryotic ribosomal subunit. During the assembly of the SSU processome in the nucleolus, many ribosome biogenesis factors, an RNA chaperone and ribosomal proteins associate with the nascent pre-rRNA and work in concert to generate RNA folding, modifications, rearrangements and cleavage as well as targeted degradation of pre-ribosomal RNA by the RNA exosome. This is Small ribosomal subunit protein eS8 (RpS8) from Spodoptera frugiperda (Fall armyworm).